A 78-amino-acid polypeptide reads, in one-letter code: uncharacterized protein (78 aa).

This is an uncharacterized protein from Methanocaldococcus jannaschii (strain ATCC 43067 / DSM 2661 / JAL-1 / JCM 10045 / NBRC 100440) (Methanococcus jannaschii).